The chain runs to 352 residues: Phospho-N-acetylmuramoyl-pentapeptide-transferase (352 aa).

Helical transmembrane passes span 10-30, 67-87, 88-108, 129-149, 159-179, 191-211, 227-247, 255-275, 280-300, and 329-349; these read YMFFSYISVRAGFAFFIALFL, TMGGLIFIFATIVASLLCADL, NNFYVIIGILCLVLFCTIGLV, LLSQFIASFICVFFLYIMGIN, YALFDGGIFMLALWILVIISS, GLATVPSIFSLLSLSAFLYLS, GLGELVVLSAALVGALMGFLW, VFMGDSGSLSIGAFLGYLGIV, ILLLLIGFVFVLETISVILQV, and KIIVRFWMIALLANIIALISI.

It belongs to the glycosyltransferase 4 family. MraY subfamily. The cofactor is Mg(2+).

It is found in the cell inner membrane. The enzyme catalyses UDP-N-acetyl-alpha-D-muramoyl-L-alanyl-gamma-D-glutamyl-meso-2,6-diaminopimeloyl-D-alanyl-D-alanine + di-trans,octa-cis-undecaprenyl phosphate = di-trans,octa-cis-undecaprenyl diphospho-N-acetyl-alpha-D-muramoyl-L-alanyl-D-glutamyl-meso-2,6-diaminopimeloyl-D-alanyl-D-alanine + UMP. It functions in the pathway cell wall biogenesis; peptidoglycan biosynthesis. Its function is as follows. Catalyzes the initial step of the lipid cycle reactions in the biosynthesis of the cell wall peptidoglycan: transfers peptidoglycan precursor phospho-MurNAc-pentapeptide from UDP-MurNAc-pentapeptide onto the lipid carrier undecaprenyl phosphate, yielding undecaprenyl-pyrophosphoryl-MurNAc-pentapeptide, known as lipid I. In Campylobacter lari (strain RM2100 / D67 / ATCC BAA-1060), this protein is Phospho-N-acetylmuramoyl-pentapeptide-transferase.